A 956-amino-acid polypeptide reads, in one-letter code: Pyruvate, phosphate dikinase, chloroplastic (956 aa).

The N-terminal 79 residues, 1–79 (MMSSLFVEGM…AVLNPVSPPV (79 aa)), are a transit peptide targeting the chloroplast. The residue at position 536 (threonine 536) is a Phosphothreonine; by PDRP1. Histidine 538 serves as the catalytic Tele-phosphohistidine intermediate. Substrate contacts are provided by arginine 644, arginine 701, glutamate 830, glycine 851, threonine 852, asparagine 853, and aspartate 854. Glutamate 830 lines the Mg(2+) pocket. Aspartate 854 contributes to the Mg(2+) binding site. The active-site Proton donor is cysteine 916.

Belongs to the PEP-utilizing enzyme family. As to quaternary structure, homotetramer. The cofactor is Mg(2+). In terms of processing, phosphorylation of Thr-536 in the dark inactivates the enzyme. Dephosphorylation upon light stimulation reactivates the enzyme.

It is found in the plastid. It localises to the chloroplast. The enzyme catalyses pyruvate + phosphate + ATP = phosphoenolpyruvate + AMP + diphosphate + H(+). Activated by light-induced dephosphorylation. Inhibited by dark-induced phosphorylation. Both reactions are catalyzed by PDRP1. In terms of biological role, formation of phosphoenolpyruvate. The polypeptide is Pyruvate, phosphate dikinase, chloroplastic (PPDK) (Flaveria pringlei).